The following is a 195-amino-acid chain: Cysteine/O-acetylserine efflux protein (195 aa).

The Periplasmic segment spans residues 1-7 (MTPTLLS). The helical transmembrane segment at 8 to 28 (AFWTYTLITAMTPGPNNILAL) threads the bilayer. Residues 29 to 46 (SSATSHGFRQSTRVLAGM) are Cytoplasmic-facing. A helical transmembrane segment spans residues 47-67 (SLGFLIVMLLCAGISFSLAVI). Residues 68 to 69 (DP) are Periplasmic-facing. The helical transmembrane segment at 70-90 (AAVHLLSWAGAAYIVWLAWKI) threads the bilayer. Residues 91–104 (ATSPTKEDGLQAKP) are Cytoplasmic-facing. Residues 105-125 (ISFWASFALQFVNVKIILYGV) form a helical membrane-spanning segment. Topologically, residues 126–141 (TALSTFVLPQTQALSW) are periplasmic. The helical transmembrane segment at 142–162 (VVGVSVLLAMIGTFGNVCWAL) threads the bilayer. The Cytoplasmic segment spans residues 163–176 (AGHLFQRLFRQYGR). The chain crosses the membrane as a helical span at residues 177-194 (QLNIVLALLLVYCAVRIF). Position 195 (Tyr195) is a topological domain, periplasmic.

The protein belongs to the Rht family.

Its subcellular location is the cell inner membrane. It carries out the reaction O-acetyl-L-serine(in) = O-acetyl-L-serine(out). The enzyme catalyses L-cysteine(in) = L-cysteine(out). Functionally, exporter of O-acetylserine (OAS) and cysteine. This is Cysteine/O-acetylserine efflux protein (eamB) from Escherichia coli O9:H4 (strain HS).